Consider the following 233-residue polypeptide: Lactate utilization protein C (233 aa).

It belongs to the LutC/YkgG family.

Is involved in L-lactate degradation and allows cells to grow with lactate as the sole carbon source. In Oceanobacillus iheyensis (strain DSM 14371 / CIP 107618 / JCM 11309 / KCTC 3954 / HTE831), this protein is Lactate utilization protein C.